The chain runs to 209 residues: MNNDDIILAEMRPKKRAGRRVFKETRHPVYRGIRRRNGDKWVCEVREPTHQRRIWLGTYPTADMAARAHDVAVLALRGRSACLNFADSAWRLPVPESNDPDVIRRVAAEAAEMFRPVDLESGITVLPCAGDDVDLGFGSGSGSGSGSEERNSSSYGFGDYEEVSTTMMRLAEGPLMSPPRSYMEDMTPTNVYTEEEMCYEDMSLWSYRY.

The short motif at 14–26 (KKRAGRRVFKETR) is the Nuclear localization signal element. The AP2/ERF DNA-binding region spans 29 to 86 (VYRGIRRRNGDKWVCEVREPTHQRRIWLGTYPTADMAARAHDVAVLALRGRSACLNFA). The tract at residues 137-157 (FGSGSGSGSGSEERNSSSYGF) is disordered.

Belongs to the AP2/ERF transcription factor family. ERF subfamily.

Its subcellular location is the nucleus. In terms of biological role, transcriptional activator that binds specifically to the DNA sequence 5'-[AG]CCGAC-3'. Binding to the C-repeat/DRE element mediates cold or dehydration-inducible transcription. CBF/DREB1 factors play a key role in freezing tolerance and cold acclimation. The polypeptide is Dehydration-responsive element-binding protein 1F (DREB1F) (Arabidopsis thaliana (Mouse-ear cress)).